The chain runs to 1573 residues: Mediator of RNA polymerase II transcription subunit 1 (1573 aa).

Residues 588 to 592 (LTSLL) carry the LXXLL motif 1 motif. Disordered stretches follow at residues 595–691 (TSNS…EDDF), 774–883 (SKLP…FKDF), and 928–1564 (LGGP…GDDD). The span at 606 to 617 (PTPPQHTPPPAS) shows a compositional bias: pro residues. The LXXLL motif 2 signature appears at 629 to 633 (LMNLL). Residues 651 to 668 (ERQNSSGSPRTELGSSAS) are compositionally biased toward polar residues. The span at 678–691 (TGTEKMKNQTEDDF) shows a compositional bias: basic and acidic residues. Composition is skewed to polar residues over residues 791–804 (RDSSSSGHSQSTLF), 835–864 (GSPNSDSPNTFFNSVDFNPDLLNSQSQSGF), and 934–944 (QETQSRSQSPL). Basic and acidic residues predominate over residues 949 to 961 (LGKDRPQKQKVKE). Gly residues predominate over residues 963-973 (GNGGGAGGGLS). Low complexity-rich tracts occupy residues 1025-1038 (PTSTGGSKSPGTSG), 1053-1085 (KITIQIPKGTMSVGKPSSHSQYSSSGSSSSSSS), 1092-1116 (SSLSSSASGKIKSNKSDGSSGMKIG), 1124-1143 (SGQSGQSNSQSKNSSQSMGK), and 1155-1164 (SSNVNNSSGS). The segment covering 1176–1193 (MNPSLSKPNISPSHSRPS) has biased composition (polar residues). Positions 1226 to 1277 (LSGSGSNSTTKSSSGLVSSGSLTQKPNSSSSSSSSSSSSSSSSSSSSSSFSS) are enriched in low complexity. Residues 1278–1290 (GVSQNLHSSSKGK) show a composition bias toward polar residues. Residues 1350 to 1362 (PTKREKGEKDKSK) are compositionally biased toward basic and acidic residues. 2 stretches are compositionally biased toward polar residues: residues 1420-1435 (SQMQKNYGSPLISGST) and 1443-1457 (PSHNKSPAYTPQALD). Low complexity predominate over residues 1461-1471 (ESGSSSIAEKS). Residues 1496 to 1505 (KHKKHKKEKK) are compositionally biased toward basic residues. The segment covering 1506 to 1518 (RLKDKDRDREKKK) has biased composition (basic and acidic residues).

It belongs to the Mediator complex subunit 1 family. In terms of assembly, component of the Mediator complex.

The protein localises to the nucleus. Its function is as follows. Component of the Mediator complex, a coactivator involved in the regulated transcription of nearly all RNA polymerase II-dependent genes. Mediator functions as a bridge to convey information from gene-specific regulatory proteins to the basal RNA polymerase II transcription machinery. Mediator is recruited to promoters by direct interactions with regulatory proteins and serves as a scaffold for the assembly of a functional preinitiation complex with RNA polymerase II and the general transcription factors. The sequence is that of Mediator of RNA polymerase II transcription subunit 1 (med1) from Xenopus tropicalis (Western clawed frog).